The chain runs to 325 residues: Retinal homeobox protein Rx-B (325 aa).

The Octapeptide motif motif lies at 32–39 (HSIEAILG). The segment covering 75-87 (TEEIHPQQEHLED) has biased composition (basic and acidic residues). The segment at 75-136 (TEEIHPQQEH…KKKHRRNRTT (62 aa)) is disordered. The span at 99-117 (AKTSSECLSPGLSTSNSDN) shows a compositional bias: polar residues. Positions 130–189 (HRRNRTTFTTYQLHELERAFEKSHYPDVYSREELAMKVNLPEVRVQVWFQNRRAKWRRQE) form a DNA-binding region, homeobox. The OAR motif lies at 302–315 (NSIASLRMKAKEHI). Positions 308 to 312 (RMKAK) match the Nuclear localization signal motif.

This sequence belongs to the paired homeobox family. Bicoid subfamily. In terms of tissue distribution, highly expressed in anterior neural plate followed by neural retina, pigmented epithelium, in pineal gland, diencephalon floor and epiphysis. At later stages, the neuroretina remains the primary site of expression. No expression in the developing lens and cornea.

Its subcellular location is the nucleus. Functionally, plays a critical role in eye formation by regulating the initial specification of retinal cells and/or their subsequent proliferation. The chain is Retinal homeobox protein Rx-B (rax-b) from Xenopus laevis (African clawed frog).